The sequence spans 216 residues: Small ribosomal subunit protein uS4 (216 aa).

In terms of domain architecture, S4 RNA-binding spans 111–175; sequence RRLQTQVLRL…SPLVSESHPE (65 aa). A disordered region spans residues 194-216; sequence VAEAKQAKEKPPERGGRKRRGRR. The span at 198-208 shows a compositional bias: basic and acidic residues; the sequence is KQAKEKPPERG.

Belongs to the universal ribosomal protein uS4 family. Part of the 30S ribosomal subunit. Contacts protein S5. The interaction surface between S4 and S5 is involved in control of translational fidelity.

Its function is as follows. One of the primary rRNA binding proteins, it binds directly to 16S rRNA where it nucleates assembly of the body of the 30S subunit. With S5 and S12 plays an important role in translational accuracy. The polypeptide is Small ribosomal subunit protein uS4 (Methanosarcina barkeri (strain Fusaro / DSM 804)).